A 251-amino-acid chain; its full sequence is Uridylate kinase (251 aa).

19 to 22 serves as a coordination point for ATP; it reads KLSG. Position 61 (glycine 61) interacts with UMP. Residues glycine 62 and arginine 66 each coordinate ATP. Residues aspartate 81 and 142 to 149 each bind UMP; that span reads IGNPFFTT. Residues threonine 169, glutamine 170, tyrosine 175, and aspartate 178 each contribute to the ATP site.

This sequence belongs to the UMP kinase family. In terms of assembly, homohexamer.

It is found in the cytoplasm. The catalysed reaction is UMP + ATP = UDP + ADP. It functions in the pathway pyrimidine metabolism; CTP biosynthesis via de novo pathway; UDP from UMP (UMPK route): step 1/1. Inhibited by UTP. In terms of biological role, catalyzes the reversible phosphorylation of UMP to UDP. The chain is Uridylate kinase from Hyphomonas neptunium (strain ATCC 15444).